The sequence spans 124 residues: Small ribosomal subunit protein uS13 (124 aa).

The tract at residues 95–124 (GLPVRGQRTKTNARTRKGPKRTIAGKKKAR) is disordered.

Belongs to the universal ribosomal protein uS13 family. As to quaternary structure, part of the 30S ribosomal subunit. Forms a loose heterodimer with protein S19. Forms two bridges to the 50S subunit in the 70S ribosome.

In terms of biological role, located at the top of the head of the 30S subunit, it contacts several helices of the 16S rRNA. In the 70S ribosome it contacts the 23S rRNA (bridge B1a) and protein L5 of the 50S subunit (bridge B1b), connecting the 2 subunits; these bridges are implicated in subunit movement. Contacts the tRNAs in the A and P-sites. This is Small ribosomal subunit protein uS13 from Mycobacterium avium (strain 104).